Reading from the N-terminus, the 63-residue chain is Sec-independent protein translocase protein TatA (63 aa).

Residues M1 to G21 form a helical membrane-spanning segment.

It belongs to the TatA/E family. As to quaternary structure, forms a complex with TatC.

The protein resides in the cell membrane. Its function is as follows. Part of the twin-arginine translocation (Tat) system that transports large folded proteins containing a characteristic twin-arginine motif in their signal peptide across membranes. TatA could form the protein-conducting channel of the Tat system. The chain is Sec-independent protein translocase protein TatA from Shouchella clausii (strain KSM-K16) (Alkalihalobacillus clausii).